A 312-amino-acid polypeptide reads, in one-letter code: Olfactory receptor 5P4 (312 aa).

Topologically, residues 1-25 (METENDTMVTEFIILGLTDSATLRA) are extracellular. A glycan (N-linked (GlcNAc...) asparagine) is linked at N5. The chain crosses the membrane as a helical span at residues 26-46 (ILFVFFLPVYIVTVVGNISII). Over 47-54 (LLIRSSPQ) the chain is Cytoplasmic. The chain crosses the membrane as a helical span at residues 55 to 75 (LHTPMYLFLSHLAFVDIGYST). Over 76–99 (SVTPIMLISFLREETTIPLAGCAA) the chain is Extracellular. C97 and C189 are disulfide-bonded. Residues 100 to 120 (QLGSDVAFGTTECFLLATMAY) form a helical membrane-spanning segment. Residues 121–133 (DRYVAICSPLLYS) lie on the Cytoplasmic side of the membrane. Residues 134–154 (TQMSPAICCFLLGASYLGGCM) form a helical membrane-spanning segment. Topologically, residues 155 to 196 (NASSFTGCFVNLNFCGPNKVNHFFCDLFPLVKLSCGHAYIAE) are extracellular. Residues 197–217 (ISPSISSASVLVSTLSTIIVS) form a helical membrane-spanning segment. The Cytoplasmic portion of the chain corresponds to 218–237 (YIYILHSILRMRSAEGRNKA). Residues 238-258 (FSTCTSHLTAVTLFYGTVLFV) form a helical membrane-spanning segment. Topologically, residues 259-271 (YVMPKSSYSADQV) are extracellular. The helical transmembrane segment at 272–292 (KVASVVYTVVIPMLNPLIYSL) threads the bilayer. Residues 293–312 (RNKEVKEAMKKLMARTHWFP) lie on the Cytoplasmic side of the membrane.

This sequence belongs to the G-protein coupled receptor 1 family.

Its subcellular location is the cell membrane. In terms of biological role, potential odorant receptor. The sequence is that of Olfactory receptor 5P4 from Mus musculus (Mouse).